The chain runs to 384 residues: FAD-dependent urate hydroxylase (384 aa).

FAD contacts are provided by residues G11, 30 to 31 (EA), S43, and V125. Residues N178, R204, and 216–218 (YFF) contribute to the substrate site. FAD is bound by residues D285 and 295 to 299 (GQGGC).

Belongs to the FAD-dependent urate hydroxylase family. As to quaternary structure, monomer. FAD serves as cofactor.

It carries out the reaction urate + NADH + O2 + H(+) = 5-hydroxyisourate + NAD(+) + H2O. The protein operates within purine metabolism; urate degradation. In terms of biological role, catalyzes the hydroxylation of urate to 5-hydroxyisourate (HIU). This Klebsiella pneumoniae subsp. pneumoniae (strain ATCC 700721 / MGH 78578) protein is FAD-dependent urate hydroxylase.